A 333-amino-acid polypeptide reads, in one-letter code: Eukaryotic translation initiation factor 3 subunit I (333 aa).

WD repeat units lie at residues 8–47 (GHER…RLGT), 50–91 (GHTG…ALLK), 144–183 (CNDS…VLVN), and 186–225 (EHSR…HQKT). The residue at position 219 (threonine 219) is a Phosphothreonine. Lysine 264 carries the post-translational modification N6-acetyllysine. Lysine 282 is covalently cross-linked (Glycyl lysine isopeptide (Lys-Gly) (interchain with G-Cter in ubiquitin)). A WD 5 repeat occupies 283 to 324 (GHFGPINSVAFHPDGKSYSSGGEDGYVRIHYFDPQYFEFEFE). Phosphotyrosine is present on tyrosine 308.

Belongs to the eIF-3 subunit I family. In terms of assembly, component of the eukaryotic translation initiation factor 3 (eIF-3) complex, which is composed of 13 subunits: EIF3A, EIF3B, EIF3C, EIF3D, EIF3E, EIF3F, EIF3G, EIF3H, EIF3I, EIF3J, EIF3K, EIF3L and EIF3M. The eIF-3 complex appears to include 3 stable modules: module A is composed of EIF3A, EIF3B, EIF3G and EIF3I; module B is composed of EIF3F, EIF3H, and EIF3M; and module C is composed of EIF3C, EIF3D, EIF3E, EIF3K and EIF3L. EIF3C of module C binds EIF3B of module A and EIF3H of module B, thereby linking the three modules. EIF3J is a labile subunit that binds to the eIF-3 complex via EIF3B. The eIF-3 complex interacts with RPS6KB1 under conditions of nutrient depletion. Mitogenic stimulation leads to binding and activation of a complex composed of MTOR and RPTOR, leading to phosphorylation and release of RPS6KB1 and binding of EIF4B to eIF-3. Phosphorylated by TGF-beta type II receptor.

It localises to the cytoplasm. Its function is as follows. Component of the eukaryotic translation initiation factor 3 (eIF-3) complex, which is required for several steps in the initiation of protein synthesis. The eIF-3 complex associates with the 40S ribosome and facilitates the recruitment of eIF-1, eIF-1A, eIF-2:GTP:methionyl-tRNAi and eIF-5 to form the 43S pre-initiation complex (43S PIC). The eIF-3 complex stimulates mRNA recruitment to the 43S PIC and scanning of the mRNA for AUG recognition. The eIF-3 complex is also required for disassembly and recycling of post-termination ribosomal complexes and subsequently prevents premature joining of the 40S and 60S ribosomal subunits prior to initiation. The eIF-3 complex specifically targets and initiates translation of a subset of mRNAs involved in cell proliferation, including cell cycling, differentiation and apoptosis, and uses different modes of RNA stem-loop binding to exert either translational activation or repression. In Oryctolagus cuniculus (Rabbit), this protein is Eukaryotic translation initiation factor 3 subunit I.